The chain runs to 1007 residues: SUPPRESSOR OF ABI3-5 (1007 aa).

2 disordered regions span residues 1 to 185 (MDPS…RDRE) and 204 to 269 (ESPH…FSAT). 4 stretches are compositionally biased toward basic and acidic residues: residues 40–49 (PDERLMRDDV), 94–120 (YYHDSEAGSRNGHYRDHEHERSSRYDG), 138–185 (HSRD…RDRE), and 204–214 (ESPHKRYEKSR). Residues 227–236 (RSPRGRSHGR) show a composition bias toward basic residues. The segment covering 237-264 (SYREDSYEGDHWNESERRREYEDRHNQD) has biased composition (basic and acidic residues). The region spanning 272–352 (ATVVVKGLSM…RKLMFHYSQP (81 aa)) is the RRM 1 domain. Residues 378–407 (VPTDWICTICGCINFARRTSCFQCNEPKTK) form a RanBP2-type zinc finger. The region spanning 432 to 512 (HVLVVRGLDE…KILRVAYAKS (81 aa)) is the RRM 2 domain. 6 disordered regions span residues 556-581 (GEKQNTGGQAQGVGEIESQKGTSAPQ), 631-656 (PDQNNESKVTENQPDSAKKEKSSQQK), 725-755 (HETQIQRPSPSLGDNPPTVSAEARSSFSTGQ), 771-797 (STSNHGVSALTTAESSSSSTTGGTLMG), 810-910 (ASSS…GITT), and 945-977 (SGLGKDGSGMKEPVQAQGVDRRAGLGSQQKKVD). Residues 631-645 (PDQNNESKVTENQPD) show a composition bias toward polar residues. Low complexity-rich tracts occupy residues 778–793 (SALTTAESSSSSTTGG) and 823–835 (PSASPASVSVSGS). A compositionally biased stretch (basic and acidic residues) spans 849 to 867 (THREQPQTSYRDRAAERRN). One can recognise a G-patch domain in the interval 928–974 (ESNVGNRMLRNMGWHEGSGLGKDGSGMKEPVQAQGVDRRAGLGSQQK).

Interacts with the pre-spliceosomal component U2AF65A. In terms of tissue distribution, ubiquitous with highest expression in siliques toward the end of seed maturation.

The protein localises to the nucleus. Functionally, splicing factor that controls alternative splicing of the developmental regulator ABI3. Reduces splicing of a cryptic intron in ABI3, leading to a decreased in ABI3-beta transcript. Regulates the splicing of the receptor-like kinase SNC4/LRKL-2.6. The chain is SUPPRESSOR OF ABI3-5 from Arabidopsis thaliana (Mouse-ear cress).